Consider the following 872-residue polypeptide: Alanine--tRNA ligase (872 aa).

4 residues coordinate Zn(2+): H567, H571, C669, and H673.

The protein belongs to the class-II aminoacyl-tRNA synthetase family. It depends on Zn(2+) as a cofactor.

It is found in the cytoplasm. The catalysed reaction is tRNA(Ala) + L-alanine + ATP = L-alanyl-tRNA(Ala) + AMP + diphosphate. In terms of biological role, catalyzes the attachment of alanine to tRNA(Ala) in a two-step reaction: alanine is first activated by ATP to form Ala-AMP and then transferred to the acceptor end of tRNA(Ala). Also edits incorrectly charged Ser-tRNA(Ala) and Gly-tRNA(Ala) via its editing domain. The chain is Alanine--tRNA ligase from Streptococcus pyogenes serotype M6 (strain ATCC BAA-946 / MGAS10394).